A 431-amino-acid polypeptide reads, in one-letter code: tRNA-specific 2-thiouridylase MnmA (431 aa).

Residues 35-42 and leucine 61 contribute to the ATP site; that span reads AMSGGVDS. The Nucleophile role is filled by cysteine 129. Cysteine 129 and cysteine 226 are oxidised to a cystine. Glycine 153 serves as a coordination point for ATP. The interval 176–178 is interaction with tRNA; it reads RDQ. Cysteine 226 acts as the Cysteine persulfide intermediate in catalysis. Residues 407 to 431 are disordered; that stretch reads PKPPNEDLLDTNESSDLVSPKRSAC.

It belongs to the MnmA/TRMU family.

The protein resides in the cytoplasm. It catalyses the reaction S-sulfanyl-L-cysteinyl-[protein] + uridine(34) in tRNA + AH2 + ATP = 2-thiouridine(34) in tRNA + L-cysteinyl-[protein] + A + AMP + diphosphate + H(+). In terms of biological role, catalyzes the 2-thiolation of uridine at the wobble position (U34) of tRNA, leading to the formation of s(2)U34. In Beijerinckia indica subsp. indica (strain ATCC 9039 / DSM 1715 / NCIMB 8712), this protein is tRNA-specific 2-thiouridylase MnmA.